The chain runs to 371 residues: Histidinol-phosphate aminotransferase (371 aa).

N6-(pyridoxal phosphate)lysine is present on lysine 228.

The protein belongs to the class-II pyridoxal-phosphate-dependent aminotransferase family. Histidinol-phosphate aminotransferase subfamily. The cofactor is pyridoxal 5'-phosphate.

It carries out the reaction L-histidinol phosphate + 2-oxoglutarate = 3-(imidazol-4-yl)-2-oxopropyl phosphate + L-glutamate. Its pathway is amino-acid biosynthesis; L-histidine biosynthesis; L-histidine from 5-phospho-alpha-D-ribose 1-diphosphate: step 7/9. The chain is Histidinol-phosphate aminotransferase from Methanococcus maripaludis (strain C5 / ATCC BAA-1333).